A 403-amino-acid chain; its full sequence is 26S proteasome regulatory subunit 6B homolog (403 aa).

Met1 is modified (N-acetylmethionine). Residue 191–198 participates in ATP binding; the sequence is GPPGTGKT.

Belongs to the AAA ATPase family.

The protein localises to the cytoplasm. It is found in the nucleus. Its function is as follows. The 26S proteasome is involved in the ATP-dependent degradation of ubiquitinated proteins. The regulatory (or ATPase) complex confers ATP dependency and substrate specificity to the 26S complex. This is 26S proteasome regulatory subunit 6B homolog (psmC4) from Dictyostelium discoideum (Social amoeba).